We begin with the raw amino-acid sequence, 261 residues long: Transmembrane and immunoglobulin domain-containing protein 1 (261 aa).

A signal peptide spans 1 to 26 (MVWKITGPLQACQLLLVVLSLPQGRT). The region spanning 27–113 (SSVLTVNGRT…LQRDQTVSVT (87 aa)) is the Ig-like C2-type 1 domain. At 27-215 (SSVLTVNGRT…DFHLLVKDKV (189 aa)) the chain is on the extracellular side. Cysteines 53 and 102 form a disulfide. 6 N-linked (GlcNAc...) asparagine glycosylation sites follow: N57, N82, N92, N117, N157, and N189. In terms of domain architecture, Ig-like C2-type 2 spans 121 to 206 (PPLLSGNGFQ…SSSLKMETMD (86 aa)). Residues C142 and C194 are joined by a disulfide bond. The helical transmembrane segment at 216 to 236 (FVMPAEPIIAACVVVVLTMAF) threads the bilayer. The Cytoplasmic segment spans residues 237-261 (ALFSRRKRIMKLCGKKNDPNSETAL).

As to quaternary structure, homodimer. N-glycosylated.

It is found in the cell membrane. Its subcellular location is the cytoplasm. Its function is as follows. May control cell-cell adhesion, cell migration and proliferation, cell morphology, and protects renal epithelial cells from oxidative cell injury to promote cell survival. This is Transmembrane and immunoglobulin domain-containing protein 1 from Mus musculus (Mouse).